Reading from the N-terminus, the 409-residue chain is Mitochondrial inner membrane protein oxa1-2 (409 aa).

A helical membrane pass occupies residues 76-96 (VVYTPSLPLSSSVLASFSFLP). The Mitochondrial intermembrane segment spans residues 97 to 114 (HNILQNGLNTLHIWSGLP). The helical transmembrane segment at 115 to 135 (WWASIAACAVAMRIAVFPIML) threads the bilayer. Residues 136–188 (KMMKTSAKLAIINPKVAEHMSVLSKAKAEGNSELMMQATTQIQNLYKVNNVNP) lie on the Mitochondrial matrix side of the membrane. Residues 189 to 209 (LNLLSAPVFQGILFISFFYAL) form a helical membrane-spanning segment. Over 210-235 (KTMAGVPVEGFTDGGFWWVNDLSQPD) the chain is Mitochondrial intermembrane. A helical membrane pass occupies residues 236 to 256 (PLHIFPVANGLLMLLNIELGS). At 257–275 (ETGSNKVAMSPSMKKFFRF) the chain is on the mitochondrial matrix side. The helical transmembrane segment at 276-296 (LCLASPLFTMNFPMAIFMYWF) threads the bilayer. Over 297 to 409 (PSNVFSVFQG…SVTKPTEKKD (113 aa)) the chain is Mitochondrial intermembrane. Residues 369-409 (TDTNNEQKPTNNSTITKATTLSDNSQNDKSSSVTKPTEKKD) are disordered. Polar residues predominate over residues 374–403 (EQKPTNNSTITKATTLSDNSQNDKSSSVTK).

Belongs to the OXA1/ALB3/YidC family.

The protein localises to the mitochondrion inner membrane. Required for the insertion of integral membrane proteins into the mitochondrial inner membrane. Essential for the activity and assembly of cytochrome c oxidase. It is essential for viability while oxa101 is not. When both are deleted the cell is non-viable, suggesting that oxa101 act as a back-up for oxa102. This chain is Mitochondrial inner membrane protein oxa1-2 (oxa102), found in Schizosaccharomyces pombe (strain 972 / ATCC 24843) (Fission yeast).